A 260-amino-acid chain; its full sequence is Proteasome assembly chaperone 2 (260 aa).

This sequence belongs to the PSMG2 family. In terms of assembly, forms a heterodimer with psmg1. Post-translationally, degraded by the proteasome upon completion of 20S proteasome maturation.

It localises to the nucleus. Chaperone protein which promotes assembly of the 20S proteasome as part of a heterodimer with psmg1. The chain is Proteasome assembly chaperone 2 from Danio rerio (Zebrafish).